The sequence spans 517 residues: Crotonobetaine/carnitine--CoA ligase (517 aa).

The protein belongs to the ATP-dependent AMP-binding enzyme family.

It carries out the reaction 4-(trimethylamino)butanoate + ATP + CoA = 4-(trimethylamino)butanoyl-CoA + AMP + diphosphate. It catalyses the reaction crotonobetaine + ATP + CoA = crotonobetainyl-CoA + AMP + diphosphate. The enzyme catalyses (R)-carnitine + ATP + CoA = (R)-carnitinyl-CoA + AMP + diphosphate. It participates in amine and polyamine metabolism; carnitine metabolism. Catalyzes the transfer of CoA to carnitine, generating the initial carnitinyl-CoA needed for the CaiB reaction cycle. Also has activity toward crotonobetaine and gamma-butyrobetaine. The sequence is that of Crotonobetaine/carnitine--CoA ligase from Salmonella agona (strain SL483).